A 65-amino-acid chain; its full sequence is Small, acid-soluble spore protein H 3 (65 aa).

The protein belongs to the SspH family.

The protein resides in the spore core. The polypeptide is Small, acid-soluble spore protein H 3 (Geobacillus thermodenitrificans (strain NG80-2)).